The sequence spans 185 residues: Ribosome-recycling factor (185 aa).

The protein belongs to the RRF family.

Its subcellular location is the cytoplasm. Responsible for the release of ribosomes from messenger RNA at the termination of protein biosynthesis. May increase the efficiency of translation by recycling ribosomes from one round of translation to another. The protein is Ribosome-recycling factor of Oceanobacillus iheyensis (strain DSM 14371 / CIP 107618 / JCM 11309 / KCTC 3954 / HTE831).